Here is a 373-residue protein sequence, read N- to C-terminus: MKEYVMLLLLAVCSAKPFFSPSHTALKNMMLKDMEDTDDDDNDDDDNSLFPTKEPVNPFFPFDLFPTCPFGCQCYSRVVHCSDLGLTSVPNNIPFDTRMVDLQNNKIKEIKENDFKGLTSLYALILNNNKLTKIHPKTFLTTKKLRRLYLSHNQLSEIPLNLPKSLAELRIHDNKVKKIQKDTFKGMNALHVLEMSANPLENNGIEPGAFEGVTVFHIRIAEAKLTSIPKGLPPTLLELHLDFNKISTVELEDLKRYRELQRLGLGNNRITDIENGTFANIPRVREIHLEHNKLKKIPSGLQELKYLQIIFLHYNSIAKVGVNDFCPTVPKMKKSLYSAISLFNNPMKYWEIQPATFRCVLGRMSVQLGNVGK.

A signal peptide spans 1–15 (MKEYVMLLLLAVCSA). A propeptide spanning residues 16–32 (KPFFSPSHTALKNMMLK) is cleaved from the precursor. O-linked (GalNAc...) serine glycosylation is present at Ser-48. The 37-residue stretch at 59-95 (FFPFDLFPTCPFGCQCYSRVVHCSDLGLTSVPNNIPF) folds into the LRRNT domain. Cystine bridges form between Cys-68–Cys-74 and Cys-72–Cys-81. 11 LRR repeats span residues 96–117 (DTRM…DFKG), 120–141 (SLYA…TFLT), 144–166 (KLRR…PKSL), 167–186 (AELR…TFKG), 189–212 (ALHV…AFEG), 235–255 (TLLE…EDLK), 259–280 (ELQR…TFAN), 283–305 (RVRE…QELK), 306–327 (YLQI…DFCP), 328–349 (TVPK…PMKY), and 350–373 (WEIQ…NVGK). An interaction with TGFB1 region spans residues 159–205 (PLNLPKSLAELRIHDNKVKKIQKDTFKGMNALHVLEMSANPLENNGI). Residue Asn-275 is glycosylated (N-linked (GlcNAc...) asparagine). Cysteines 326 and 359 form a disulfide.

This sequence belongs to the small leucine-rich proteoglycan (SLRP) family. SLRP class I subfamily. In terms of assembly, interacts with type I collagen. DCN can inhibit collagen binding. Interacts with TGFB1, TGFB2 and TGFB3. DCN, BGN, and FMOD inhibit binding to TGFB1. Interacts with BMP2. Interacts in vitro with type II collagen. As to expression, higher expression in heart, also detected in kidney, stomach, testes, and skin but only weakly in lung, skeletal muscle, small intestine, and thymus. Expressed specifically and predominantly in the periodontal ligament (PDL). During tooth development, strong expression is seen in the dental follicle, which is the progenitor tissue that forms cementum, alveolar bone, and the PDL. Expressed in the perichondria of the maxilla, mandible, vertebrae, and long bones. Predominantly expressed in the perichondrium/periosteum of long bones (at protein level).

It localises to the secreted. Its subcellular location is the extracellular space. The protein resides in the extracellular matrix. Binds calcium and plays a role in osteoblast-driven collagen biomineralization activity. Critical regulator of TGF-beta in articular cartilage and plays an essential role in cartilage homeostasis and osteoarthritis (OA) pathogenesis. Negatively regulates chondrogenesis in the articular cartilage by blocking the TGF-beta/receptor interaction on the cell surface and inhibiting the canonical TGF-beta/Smad signal. Negatively regulates periodontal ligament (PDL) differentiation and mineralization to ensure that the PDL is not ossified and to maintain homeostasis of the tooth-supporting system. Inhibits BMP2-induced cytodifferentiation of PDL cells by preventing its binding to BMPR1B/BMP type-1B receptor, resulting in inhibition of BMP-dependent activation of SMAD proteins. Inhibits the interaction between TGFB1 and TGF-beta receptor type II in the presence of heparin/heparan sulfate in vitro. The sequence is that of Asporin (Aspn) from Mus musculus (Mouse).